We begin with the raw amino-acid sequence, 356 residues long: Tyrosine recombinase XerS (356 aa).

A Core-binding (CB) domain is found at 16-121 (LMPWYVLEYY…ALSSLYKYLT (106 aa)). In terms of domain architecture, Tyr recombinase spans 169 to 354 (GFLTYIDQEH…VSDEQKNALD (186 aa)). Catalysis depends on residues Arg-210, Lys-234, His-306, Arg-309, and His-332. Tyr-341 serves as the catalytic O-(3'-phospho-DNA)-tyrosine intermediate.

This sequence belongs to the 'phage' integrase family. XerS subfamily.

It is found in the cytoplasm. With respect to regulation, ftsK is required for recombination. In terms of biological role, site-specific tyrosine recombinase, which acts by catalyzing the cutting and rejoining of the recombining DNA molecules. Essential to convert dimers of the bacterial chromosome into monomers to permit their segregation at cell division. This Streptococcus pneumoniae (strain 70585) protein is Tyrosine recombinase XerS.